The primary structure comprises 215 residues: LexA repressor (215 aa).

Positions 28 to 48 (RAEIAAELGFSSPNAAEEHLR) form a DNA-binding region, H-T-H motif. Catalysis depends on for autocatalytic cleavage activity residues serine 133 and lysine 170.

This sequence belongs to the peptidase S24 family. In terms of assembly, homodimer.

It carries out the reaction Hydrolysis of Ala-|-Gly bond in repressor LexA.. Represses a number of genes involved in the response to DNA damage (SOS response), including recA and lexA. In the presence of single-stranded DNA, RecA interacts with LexA causing an autocatalytic cleavage which disrupts the DNA-binding part of LexA, leading to derepression of the SOS regulon and eventually DNA repair. This is LexA repressor from Burkholderia cenocepacia (strain HI2424).